We begin with the raw amino-acid sequence, 385 residues long: MADKENSTPASAARLTRSSAAAGAQAKRSAAAGVADGGAPPAKRKRVALSDLPTLSNAVVVAPRQPHHPVVIKPSSKQPEPAAEAAAPSGGGGGSPVSSASTSTASPSSGWDPQYASDIYTYLRSMEVEARRQSAADYIEAVQVDVTANMRAILVDWLVEVADEYKLVADTLYLAVSYLDRYLSAHPLRRNRLQLLGVGAMLIAAKYEEISPPHVEDFCYITDNTYTRQEVVKMESDILKLLEFEMGNPTIKTFLRRFTRSCQEDKKRSSLLLEFMGSYLAELSLLDYGCLRFLPSVVAASVVFVAKLNIDPYTNPWSKKMQKLTGYKVSELKDCILAIHDLQLRKKCSNLTAIRDKYKQHKFKCVSTLLPPVDIPASYLQDLTE.

The tract at residues 1 to 110 is disordered; that stretch reads MADKENSTPA…STSTASPSSG (110 aa). 3 stretches are compositionally biased toward low complexity: residues 7–41, 74–88, and 96–110; these read STPA…GAPP, PSSK…AAAP, and PVSS…PSSG.

The protein belongs to the cyclin family. Cyclin AB subfamily.

This is Cyclin-A3-2 (CYCA3-2) from Oryza sativa subsp. japonica (Rice).